The chain runs to 459 residues: Argininosuccinate lyase (459 aa).

It belongs to the lyase 1 family. Argininosuccinate lyase subfamily.

Its subcellular location is the cytoplasm. The catalysed reaction is 2-(N(omega)-L-arginino)succinate = fumarate + L-arginine. It functions in the pathway amino-acid biosynthesis; L-arginine biosynthesis; L-arginine from L-ornithine and carbamoyl phosphate: step 3/3. The chain is Argininosuccinate lyase from Oceanobacillus iheyensis (strain DSM 14371 / CIP 107618 / JCM 11309 / KCTC 3954 / HTE831).